Consider the following 712-residue polypeptide: Lactoperoxidase (712 aa).

Positions M1–A21 are cleaved as a signal peptide. Positions S22–L117 are excised as a propeptide. A glycan (N-linked (GlcNAc...) (complex) asparagine; alternate) is linked at N106. Residue N106 is glycosylated (N-linked (GlcNAc...) (hybrid) asparagine; alternate). Cystine bridges form between C123–C284, C132–C145, C246–C256, and C250–C274. An N-linked (GlcNAc...) (complex) asparagine; alternate glycan is attached at N212. N212 is a glycosylation site (N-linked (GlcNAc...) (hybrid) asparagine; alternate). D225 is a binding site for heme b. The active-site Proton acceptor is the H226. D227 serves as a coordination point for Ca(2+). 4 residues coordinate Ca(2+): T301, F303, D305, and S307. The residue at position 315 (S315) is a Phosphoserine. The N-linked (GlcNAc...) (high mannose) asparagine glycan is linked to N322. C354 and C365 are oxidised to a cystine. A glycan (N-linked (GlcNAc...) asparagine) is linked at N358. E375 contacts heme b. A glycan (N-linked (GlcNAc...) (complex) asparagine; alternate) is linked at N449. N449 carries N-linked (GlcNAc...) (hybrid) asparagine; alternate glycosylation. N449 carries N-linked (GlcNAc...) (high mannose) asparagine; alternate glycosylation. Heme b is bound at residue H468. Y482 bears the 3'-nitrotyrosine mark. 2 disulfides stabilise this stretch: C573-C630 and C671-C696.

It belongs to the peroxidase family. XPO subfamily. It depends on Ca(2+) as a cofactor. Heme b serves as cofactor. Mammary gland; milk.

The protein resides in the secreted. The protein localises to the cytoplasm. It carries out the reaction 2 a phenolic donor + H2O2 = 2 a phenolic radical donor + 2 H2O. The enzyme catalyses thiocyanate + H2O2 + H(+) = hypothiocyanous acid + H2O. It catalyses the reaction iodide + H2O2 = hypoiodite + H2O. With respect to regulation, inhibited by small molecule methimazole (MMZ). Functionally, heme-containing oxidoreductase which catalyzes the conversion of thiocyanate (SCN(-)) into antimicrobial agent hypothiocyanous acid (OSCN(-)) in the presence of hydrogen peroxide (H2O2). Also involved in the conversion of iodide (I(-)) into hypoiodite (IO(-)) in the presence of H2O2. Responsible for the inactivation of a wide range of micro-organisms and hence, important component of defense mechanism. Shows antibacterial properties against several Gram-positive bacteria including some Staphylococcus species and Gram-negative bacteria including E.coli, P.aeruginosa and some Salmonella species. Inhibits the growth of several fungi including A.niger, Trichoderma species, C.cassicola, P.meadii and C.salmonicolor. Does not have anti-fungal activity towards C.albicans and Pythium species. May protect the udder from infection and may promote growth in newborns. May be implicated in airway host defense against infection. May contribute to maintaining an appropriate H2O2 cellular level, therefore protecting cells from H2O2-caused injuries and inflammation. The protein is Lactoperoxidase (LPO) of Capra hircus (Goat).